A 205-amino-acid chain; its full sequence is Ypt/Rab-type GTPase avaA (205 aa).

Residues 17 to 23 (SGVGKTS), 33 to 40 (FSGSYKAT), Gly-66, 125 to 128 (NKID), and 157 to 159 (SAK) each bind GTP. The short motif at 37 to 45 (YKATIGADF) is the Effector region element. 2 S-geranylgeranyl cysteine lipidation sites follow: Cys-203 and Cys-205. Cys-205 is subject to Cysteine methyl ester.

The protein belongs to the small GTPase superfamily. Rab family.

Rab activation is generally mediated by a guanine exchange factor (GEF), while inactivation through hydrolysis of bound GTP is catalyzed by a GTPase activating protein (GAP). In terms of biological role, ypt/Rab-type GTPases are key regulators of membrane trafficking and intracellular vesicular transport. They act as molecular switches that convert between GTP-bound and GDP-bound states, and regulate virtually all steps of membrane traffic from the formation of the transport vesicle at the donor membrane to its fusion at the target membrane. In the GDP-bound state, Ypt proteins are predominantly cytosolic, solubilized through the interaction with a GDP dissociation inhibitor (GDI). In the GTP-bound state, the proteins are membrane bound and interact with specific effector proteins that select cargo, promote vesicle movement, or verify the correct site of fusion. AvaA functions in vacuolar biogenesis. The chain is Ypt/Rab-type GTPase avaA from Emericella nidulans (strain FGSC A4 / ATCC 38163 / CBS 112.46 / NRRL 194 / M139) (Aspergillus nidulans).